Here is a 114-residue protein sequence, read N- to C-terminus: Cyclin-dependent kinase 2-associated protein 1 (114 aa).

The interval 18 to 57 is disordered; the sequence is AGSVHSPSTSMATSSQYRQLLSDYGPPSLGYTQGTGNSQV. The interaction with CDK2AP2 stretch occupies residues 19–24; the sequence is GSVHSP. A compositionally biased stretch (polar residues) spans 20-36; that stretch reads SVHSPSTSMATSSQYRQ. At serine 45 the chain carries Phosphoserine; by IKKE. The segment covering 47–57 has biased composition (polar residues); the sequence is GYTQGTGNSQV.

The protein belongs to the CDK2AP family. Homodimer. Component of the nucleosome remodeling and deacetylase (NuRD) repressor complex, composed of core proteins MTA1, MTA2, MTA3, RBBP4, RBBP7, HDAC1, HDAC2, MBD2, MBD3, and peripherally associated proteins CDK2AP1, CDK2AP2, GATAD2A, GATAD2B, CHD3, CHD4 and CHD5. The exact stoichiometry of the NuRD complex is unknown, and some subunits such as MBD2 and MBD3, GATAD2A and GATAD2B, and CHD3, CHD4 and CHD5 define mutually exclusive NuRD complexes. Interacts with monomeric unphosphorylated CDK2. Interacts with CDK2AP2. Interacts with GATAD2A. Interacts with HDAC1. Interacts with HDAC2. Interacts with MBD2. Interacts with MBD3. Interacts with RBBP4. Interacts with RBBP7. In terms of processing, phosphorylated in vitro by IKBKE at Ser-45.

It is found in the nucleus. Its subcellular location is the chromosome. Inhibitor of cyclin-dependent kinase CDK2. Also acts as a component of the histone deacetylase NuRD complex which participates in the remodeling of chromatin. This is Cyclin-dependent kinase 2-associated protein 1 (Cdk2ap1) from Mus musculus (Mouse).